Here is an 800-residue protein sequence, read N- to C-terminus: Putative antiporter subunit mnhA2 (800 aa).

Transmembrane regions (helical) follow at residues 1-21 (MSLVYLLIAILVIMAMILLMS), 33-53 (IALVAPVISSIYFLIQIPSVA), 78-98 (GLSLMFSLIISLIGIAVFFYA), 118-138 (LFMFSMIGIVLSDNTILMYIF), 167-187 (FMITVFGGLALLVGFIMLYIM), 207-227 (GLFIPMIFMFLLGAFTKSAQF), 241-261 (TPVSAYLHSATMVKAGIFLLL), 273-293 (YIYIVTFVGLITMLFGSITAL), 300-320 (GILAYSTISQLGMIMAMVGIG), 331-351 (IASIYVFVLFGALFHLMNHAI), 387-407 (LVMTIAALSMAGVPFLNGFLS), 424-444 (FSLISMIAIVFVGVIASIFTF), 472-492 (PWLFSLPSLILMVLVPVIFFV), 527-547 (GFNIPLLLTIIIILLGSVLAI), 595-615 (IIMTLGIFMIIIGYGYIRIGL), 627-647 (GALEIILAIVTVTIGISLIFI), 651-671 (LTMVILNGVIGFVVTLFFIAM), 676-696 (LALTQLVVETITTILFIVSFS), 712-732 (IIKISVSLLMALIVVSLIFIT), and 768-788 (LDTLFEGLVLIITGLGIYTLL).

Belongs to the CPA3 antiporters (TC 2.A.63) subunit A family. As to quaternary structure, may form a heterooligomeric complex that consists of seven subunits: mnhA2, mnhB2, mnhC2, mnhD2, mnhE2, mnhF2 and mnhG2.

Its subcellular location is the cell membrane. This chain is Putative antiporter subunit mnhA2 (mnhA2), found in Staphylococcus aureus (strain Mu3 / ATCC 700698).